We begin with the raw amino-acid sequence, 155 residues long: Endoribonuclease YbeY (155 aa).

Residues H114, H118, and H124 each contribute to the Zn(2+) site.

This sequence belongs to the endoribonuclease YbeY family. The cofactor is Zn(2+).

The protein resides in the cytoplasm. In terms of biological role, single strand-specific metallo-endoribonuclease involved in late-stage 70S ribosome quality control and in maturation of the 3' terminus of the 16S rRNA. The polypeptide is Endoribonuclease YbeY (Shigella flexneri serotype 5b (strain 8401)).